The chain runs to 992 residues: MGMRSAARMPKLTRRSRILIMIALGVIVLLLAGPRLIDAYVDWLWFGELGYRSVFTTMLATRIVVCLVAGVVVGGIVFGGLALAYRTRPVFVPDADNDPVARYRAVVLARLRLVGIGIPAAIGLLAGIVAQSYWARIQLFLHGGDFGVRDPQFGRDLGFYAFELPFYRLMLSYMLVSVFLAFVANLVAHYIFGGIRLSGRTGALSRSARVQLVSLVGVLVLLKAVAYWLDRYELLSHTRGGKPFTGAGYTDINAVLPAKLILMAIALICAAAVFSAIALRDLRIPAIGLVLLLLSSLIVGAGWPLIVEQISVKPNAAQKESEYISRSITATRQAYGLTSDVVTYRNYSGDSPATAQQVAADRATTSNIRLLDPTIVSPAFTQFQQGKNFYYFPDQLSIDRYLDRNGNLRDYVVAARELNPDRLIDNQRDWINRHTVYTHGNGFIASPANTVRGIANDPNQNGGYPEFLVNVVGANGTVVSDGPAPLDQPRIYFGPVISNTSADYAIVGRNGDDREYDYETNIDTKRYTYTGSGGVPLGGWLARSVFAAKFAERNFLFSNVIGSNSKILFNRDPAQRVEAVAPWLTTDSAVYPAIVNKRLVWIVDGYTTLDNYPYSELTSLSSATADSNEVAFNRLVPDKKVSYIRNSVKATVDAYDGTVTLYQQDEKDPVLKAWMQVFPGTVKPKSDIAPELAEHLRYPEDLFKVQRMLLAKYHVNDPVTFFSTSDFWDVPLDPNPTASSYQPPYYIVAKNIAKDDNSASYQLISAMNRFKRDYLAAYISASSDPATYGNLTVLTIPGQVNGPKLANNAITTDPAVSQDLGVIGRDNQNRIRWGNLLTLPVARGGLLYVEPVYASPGASDAASSYPRLIRVAMMYNDKVGYGPTVRDALTGLFGPGAGATATGIAPTEAAVPPSPAANPPPPASGPQPPPVTAAPPVPVGAVTLSPAKVAALQEIQAAIGAARDAQKKGDFAAYGSALQRLDEAITKFNDAG.

The next 7 helical transmembrane spans lie at 17-39 (RILI…LIDA), 59-81 (LATR…FGGL), 113-135 (LVGI…SYWA), 169-191 (LMLS…AHYI), 212-229 (LVSL…AYWL), 255-277 (VLPA…FSAI), and 284-306 (IPAI…WPLI). The disordered stretch occupies residues 906–938 (PTEAAVPPSPAANPPPPASGPQPPPVTAAPPVP). The span at 912-938 (PPSPAANPPPPASGPQPPPVTAAPPVP) shows a compositional bias: pro residues.

The protein belongs to the UPF0182 family.

Its subcellular location is the cell membrane. The sequence is that of UPF0182 protein MT3285 from Mycobacterium tuberculosis (strain CDC 1551 / Oshkosh).